The following is a 352-amino-acid chain: Alanine racemase (352 aa).

Lysine 33 acts as the Proton acceptor; specific for D-alanine in catalysis. N6-(pyridoxal phosphate)lysine is present on lysine 33. Arginine 129 provides a ligand contact to substrate. The active-site Proton acceptor; specific for L-alanine is tyrosine 250. Methionine 298 contributes to the substrate binding site.

The protein belongs to the alanine racemase family. Pyridoxal 5'-phosphate is required as a cofactor.

The catalysed reaction is L-alanine = D-alanine. The protein operates within amino-acid biosynthesis; D-alanine biosynthesis; D-alanine from L-alanine: step 1/1. Functionally, catalyzes the interconversion of L-alanine and D-alanine. May also act on other amino acids. This chain is Alanine racemase (alr), found in Neisseria meningitidis serogroup B (strain ATCC BAA-335 / MC58).